The chain runs to 89 residues: Small ribosomal subunit protein uS15 (89 aa).

It belongs to the universal ribosomal protein uS15 family. In terms of assembly, part of the 30S ribosomal subunit. Forms a bridge to the 50S subunit in the 70S ribosome, contacting the 23S rRNA.

In terms of biological role, one of the primary rRNA binding proteins, it binds directly to 16S rRNA where it helps nucleate assembly of the platform of the 30S subunit by binding and bridging several RNA helices of the 16S rRNA. Functionally, forms an intersubunit bridge (bridge B4) with the 23S rRNA of the 50S subunit in the ribosome. The polypeptide is Small ribosomal subunit protein uS15 (Thiobacillus denitrificans (strain ATCC 25259 / T1)).